The following is a 141-amino-acid chain: Nucleoside diphosphate kinase 1 (141 aa).

ATP-binding residues include Lys-11, Phe-59, Arg-87, Thr-93, Arg-104, and Asn-114. His-117 (pros-phosphohistidine intermediate) is an active-site residue.

Belongs to the NDK family. As to quaternary structure, homotetramer. Requires Mg(2+) as cofactor.

Its subcellular location is the cytoplasm. It carries out the reaction a 2'-deoxyribonucleoside 5'-diphosphate + ATP = a 2'-deoxyribonucleoside 5'-triphosphate + ADP. It catalyses the reaction a ribonucleoside 5'-diphosphate + ATP = a ribonucleoside 5'-triphosphate + ADP. Major role in the synthesis of nucleoside triphosphates other than ATP. The ATP gamma phosphate is transferred to the NDP beta phosphate via a ping-pong mechanism, using a phosphorylated active-site intermediate. The sequence is that of Nucleoside diphosphate kinase 1 from Protochlamydia amoebophila (strain UWE25).